The chain runs to 469 residues: RNA-editing ligase 1, mitochondrial (469 aa).

The transit peptide at 1–44 (MQLQRLGAPLLKRLVGGCIRQSTAPIMPCVVVSGSGVFLTPVRT) directs the protein to the mitochondrion. ATP-binding positions include 59-61 (IEI), 86-92 (EKVHGTN), Arg111, Glu159, Phe209, and 307-309 (KLR). Lys87 serves as the catalytic N6-AMP-lysine intermediate. The disordered stretch occupies residues 450–469 (AAAQSEAIPPLSPAAPTKGE).

This sequence belongs to the RNA ligase 2 family. As to quaternary structure, component of the RNA editing complex (editosome), a 1600 kDa complex composed of at least 20 proteins. Interacts with terminal uridylyltransferase MEAT1.

The protein localises to the mitochondrion. It catalyses the reaction ATP + (ribonucleotide)n-3'-hydroxyl + 5'-phospho-(ribonucleotide)m = (ribonucleotide)n+m + AMP + diphosphate.. Essential for RNA editing. RNA editing in kinetoplastid mitochondria inserts and deletes uridylates at multiple sites in pre-mRNAs as directed by guide RNAs. The chain is RNA-editing ligase 1, mitochondrial (REL1) from Trypanosoma brucei brucei.